A 335-amino-acid polypeptide reads, in one-letter code: V-set and immunoglobulin domain-containing protein 1 (335 aa).

The N-terminal stretch at 1-21 is a signal peptide; it reads MFPTMLKIFPILATLAGHVHG. Positions 22-136 constitute an Ig-like V-type domain; it reads VVVTVPEKTV…SQKSVIVNVL (115 aa). Topologically, residues 22-233 are extracellular; the sequence is VVVTVPEKTV…DLTSMHSDGN (212 aa). Intrachain disulfides connect cysteine 43-cysteine 115 and cysteine 160-cysteine 210. Residues 139–226 form the Ig-like C2-type domain; the sequence is PSKPFCKIEG…GNSTCELDLT (88 aa). The chain crosses the membrane as a helical span at residues 234–254; that stretch reads IVAGALIGAILAAVIICAIVW. Residues 255–335 lie on the Cytoplasmic side of the membrane; that stretch reads VLTKKAKKKK…QKEETAGSSF (81 aa). A disordered region spans residues 266–335; the sequence is SSNEMQVMAQ…QKEETAGSSF (70 aa). Polar residues predominate over residues 268–306; sequence NEMQVMAQKQSNAEYAQVPNEENTPATAVLPSNATNEQP. The span at 319–335 shows a compositional bias: basic and acidic residues; sequence NDEKHEVQKEETAGSSF.

As to expression, expressed in thymocytes.

It is found in the membrane. This chain is V-set and immunoglobulin domain-containing protein 1 (VSIG1), found in Gallus gallus (Chicken).